We begin with the raw amino-acid sequence, 481 residues long: ADAMTS-like protein 5 (481 aa).

Residues 1–42 (MGKLRPGRVEWLASGHTERPHLFQNLLLFLWALLNCGLGVSA) form the signal peptide. Positions 45 to 97 (PGEWTPWVSWTRCSSSCGRGVSVRSRRCLRLPGEEPCWGDSHEYRLCQLPDCP) constitute a TSP type-1 domain. Disulfide bonds link Cys57-Cys91, Cys61-Cys96, and Cys72-Cys81. Asn218 is a glycosylation site (N-linked (GlcNAc...) asparagine). Residues 331 to 361 (QPQPRGVEPQPPAAPAVTPAQTPTLAPDPCP) form a disordered region. Over residues 345-355 (PAVTPAQTPTL) the composition is skewed to low complexity. 3 disulfide bridges follow: Cys360-Cys425, Cys363-Cys427, and Cys377-Cys479. In terms of domain architecture, NTR spans 360 to 479 (CPPCPDTRGR…SRIRLTARRC (120 aa)).

As to quaternary structure, interacts with heparin, FBN1 and FBN2. Post-translationally, proteolytically cleaved to release a C-terminal fragment containing the NTR domain. Contains at least one additional N-linked glycosylation site.

Its subcellular location is the secreted. The protein localises to the extracellular space. It localises to the extracellular matrix. In terms of biological role, may play a role in modulation of fibrillin microfibrils in the extracellular matrix (ECM). The protein is ADAMTS-like protein 5 (ADAMTSL5) of Homo sapiens (Human).